Here is a 287-residue protein sequence, read N- to C-terminus: Phosphatidylserine decarboxylase proenzyme (287 aa).

Residues Asp89, His146, and Ser252 each act as charge relay system; for autoendoproteolytic cleavage activity in the active site. Ser252 serves as the catalytic Schiff-base intermediate with substrate; via pyruvic acid; for decarboxylase activity. Ser252 carries the pyruvic acid (Ser); by autocatalysis modification.

This sequence belongs to the phosphatidylserine decarboxylase family. PSD-B subfamily. Prokaryotic type I sub-subfamily. As to quaternary structure, heterodimer of a large membrane-associated beta subunit and a small pyruvoyl-containing alpha subunit. It depends on pyruvate as a cofactor. In terms of processing, is synthesized initially as an inactive proenzyme. Formation of the active enzyme involves a self-maturation process in which the active site pyruvoyl group is generated from an internal serine residue via an autocatalytic post-translational modification. Two non-identical subunits are generated from the proenzyme in this reaction, and the pyruvate is formed at the N-terminus of the alpha chain, which is derived from the carboxyl end of the proenzyme. The autoendoproteolytic cleavage occurs by a canonical serine protease mechanism, in which the side chain hydroxyl group of the serine supplies its oxygen atom to form the C-terminus of the beta chain, while the remainder of the serine residue undergoes an oxidative deamination to produce ammonia and the pyruvoyl prosthetic group on the alpha chain. During this reaction, the Ser that is part of the protease active site of the proenzyme becomes the pyruvoyl prosthetic group, which constitutes an essential element of the active site of the mature decarboxylase.

It is found in the cell membrane. It catalyses the reaction a 1,2-diacyl-sn-glycero-3-phospho-L-serine + H(+) = a 1,2-diacyl-sn-glycero-3-phosphoethanolamine + CO2. The protein operates within phospholipid metabolism; phosphatidylethanolamine biosynthesis; phosphatidylethanolamine from CDP-diacylglycerol: step 2/2. Its function is as follows. Catalyzes the formation of phosphatidylethanolamine (PtdEtn) from phosphatidylserine (PtdSer). The polypeptide is Phosphatidylserine decarboxylase proenzyme (Shewanella halifaxensis (strain HAW-EB4)).